A 330-amino-acid chain; its full sequence is DNA-directed RNA polymerase subunit alpha (330 aa).

Residues 1–235 (MVREKVKVST…DLFIHFLHAK (235 aa)) form an alpha N-terminal domain (alpha-NTD) region. An alpha C-terminal domain (alpha-CTD) region spans residues 270-330 (IALKYIFIDQ…KQILGILEKK (61 aa)).

Belongs to the RNA polymerase alpha chain family. In terms of assembly, in plastids the minimal PEP RNA polymerase catalytic core is composed of four subunits: alpha, beta, beta', and beta''. When a (nuclear-encoded) sigma factor is associated with the core the holoenzyme is formed, which can initiate transcription.

The protein resides in the plastid. It localises to the chloroplast. The enzyme catalyses RNA(n) + a ribonucleoside 5'-triphosphate = RNA(n+1) + diphosphate. DNA-dependent RNA polymerase catalyzes the transcription of DNA into RNA using the four ribonucleoside triphosphates as substrates. The polypeptide is DNA-directed RNA polymerase subunit alpha (rpoA) (Gossypium barbadense (Sea Island cotton)).